The sequence spans 362 residues: Phosphoserine aminotransferase (362 aa).

Position 43 (R43) interacts with L-glutamate. Residues 77 to 78, W103, T153, D173, and Q196 each bind pyridoxal 5'-phosphate; that span reads AS. K197 is subject to N6-(pyridoxal phosphate)lysine. Pyridoxal 5'-phosphate is bound at residue 238-239; the sequence is NT.

Belongs to the class-V pyridoxal-phosphate-dependent aminotransferase family. SerC subfamily. In terms of assembly, homodimer. Requires pyridoxal 5'-phosphate as cofactor.

The protein resides in the cytoplasm. It catalyses the reaction O-phospho-L-serine + 2-oxoglutarate = 3-phosphooxypyruvate + L-glutamate. The enzyme catalyses 4-(phosphooxy)-L-threonine + 2-oxoglutarate = (R)-3-hydroxy-2-oxo-4-phosphooxybutanoate + L-glutamate. Its pathway is amino-acid biosynthesis; L-serine biosynthesis; L-serine from 3-phospho-D-glycerate: step 2/3. Catalyzes the reversible conversion of 3-phosphohydroxypyruvate to phosphoserine and of 3-hydroxy-2-oxo-4-phosphonooxybutanoate to phosphohydroxythreonine. The protein is Phosphoserine aminotransferase of Lysinibacillus sphaericus (strain C3-41).